We begin with the raw amino-acid sequence, 163 residues long: Probable ribosome biogenesis protein RLP24 (163 aa).

It belongs to the eukaryotic ribosomal protein eL24 family. As to quaternary structure, associated with nucleolar and cytoplasmic pre-60S particles. At the end of biogenesis it dissociates from cytoplasmic pre-60S particles and is likely to be exchanged for its ribosomal homolog, RPL24.

Its subcellular location is the nucleus. The protein resides in the nucleolus. Functionally, involved in the biogenesis of the 60S ribosomal subunit. Ensures the docking of GTPBP4/NOG1 to pre-60S particles. The chain is Probable ribosome biogenesis protein RLP24 (RSL24D1) from Homo sapiens (Human).